The chain runs to 821 residues: Envelope glycoprotein gp160 (821 aa).

Residues M1 to W737 lie on the Extracellular side of the membrane. A disulfide bond links C67 and C80. N-linked (GlcNAc...) asparagine; by host glycosylation is found at N71, N98, N144, N175, N190, N215, N224, N266, N287, N333, N383, N389, N394, N423, N447, and N516. 4 disulfides stabilise this stretch: C127-C232, C134-C223, C139-C187, and C244-C272. The interval C139–V186 is V1. The interval C187–C223 is V2. The segment at C328–M361 is V3. Cystine bridges form between C439/C499 and C446/C469. The V4 stretch occupies residues C446–C469. Positions S515–P526 are V5. The interval G570–V590 is fusion peptide. Residues E607–I627 are a coiled coil. N-linked (GlcNAc...) asparagine; by host glycans are attached at residues N669, N675, and N694. The interval K715–K736 is MPER; binding to GalCer. A helical membrane pass occupies residues G738 to I758. The Cytoplasmic segment spans residues S759–E821. The short motif at Y765–V768 is the YXXV motif; contains endocytosis signal element. Residues K780–E805 form a disordered region. Over residues L794 to E805 the composition is skewed to basic and acidic residues.

As to quaternary structure, the mature envelope protein (Env) consists of a homotrimer of non-covalently associated gp120-gp41 heterodimers. The resulting complex protrudes from the virus surface as a spike. Interacts with host CD4 and CCR5. Gp120 also interacts with the C-type lectins CD209/DC-SIGN and CLEC4M/DC-SIGNR (collectively referred to as DC-SIGN(R)). In terms of assembly, the mature envelope protein (Env) consists of a homotrimer of non-covalently associated gp120-gp41 heterodimers. The resulting complex protrudes from the virus surface as a spike. Specific enzymatic cleavages in vivo yield mature proteins. Envelope glycoproteins are synthesized as an inactive precursor that is heavily N-glycosylated and processed likely by host cell furin in the Golgi to yield the mature SU and TM proteins. The cleavage site between SU and TM requires the minimal sequence [KR]-X-[KR]-R.

The protein resides in the virion membrane. It localises to the host cell membrane. It is found in the host endosome membrane. In terms of biological role, the surface protein gp120 (SU) attaches the virus to the host lymphoid cell by binding to the primary receptor CD4. This interaction induces a structural rearrangement creating a high affinity binding site for a chemokine coreceptor like CCR5. This peculiar 2 stage receptor-interaction strategy allows gp120 to maintain the highly conserved coreceptor-binding site in a cryptic conformation, protected from neutralizing antibodies. These changes are transmitted to the transmembrane protein gp41 and are thought to activate its fusogenic potential by unmasking its fusion peptide. Functionally, surface protein gp120 (SU) may target the virus to gut-associated lymphoid tissue (GALT) by binding host ITGA4/ITGB7 (alpha-4/beta-7 integrins), a complex that mediates T-cell migration to the GALT. Interaction between gp120 and ITGA4/ITGB7 would allow the virus to enter GALT early in the infection, infecting and killing most of GALT's resting CD4+ T-cells. This T-cell depletion is believed to be the major insult to the host immune system leading to AIDS. Its function is as follows. The surface protein gp120 is a ligand for CD209/DC-SIGN and CLEC4M/DC-SIGNR, which are respectively found on dendritic cells (DCs), and on endothelial cells of liver sinusoids and lymph node sinuses. These interactions allow capture of viral particles at mucosal surfaces by these cells and subsequent transmission to permissive cells. DCs are professional antigen presenting cells, critical for host immunity by inducing specific immune responses against a broad variety of pathogens. They act as sentinels in various tissues where they take up antigen, process it, and present it to T-cells following migration to lymphoid organs. SIV subverts the migration properties of dendritic cells to gain access to CD4+ T-cells in lymph nodes. Virus transmission to permissive T-cells occurs either in trans (without DCs infection, through viral capture and transmission), or in cis (following DCs productive infection, through the usual CD4-gp120 interaction), thereby inducing a robust infection. In trans infection, bound virions remain infectious over days and it is proposed that they are not degraded, but protected in non-lysosomal acidic organelles within the DCs close to the cell membrane thus contributing to the viral infectious potential during DCs' migration from the periphery to the lymphoid tissues. On arrival at lymphoid tissues, intact virions recycle back to DCs' cell surface allowing virus transmission to CD4+ T-cells. Virion capture also seems to lead to MHC-II-restricted viral antigen presentation, and probably to the activation of SIV-specific CD4+ cells. The transmembrane protein gp41 (TM) acts as a class I viral fusion protein. Under the current model, the protein has at least 3 conformational states: pre-fusion native state, pre-hairpin intermediate state, and post-fusion hairpin state. During fusion of viral and target intracellular membranes, the coiled coil regions (heptad repeats) assume a trimer-of-hairpins structure, positioning the fusion peptide in close proximity to the C-terminal region of the ectodomain. The formation of this structure appears to drive apposition and subsequent fusion of viral and target cell membranes. Complete fusion occurs in host cell endosomes. The virus undergoes clathrin-dependent internalization long before endosomal fusion, thus minimizing the surface exposure of conserved viral epitopes during fusion and reducing the efficacy of inhibitors targeting these epitopes. Membranes fusion leads to delivery of the nucleocapsid into the cytoplasm. In terms of biological role, the envelope glycoprotein gp160 precursor down-modulates cell surface CD4 antigen by interacting with it in the endoplasmic reticulum and blocking its transport to the cell surface. Functionally, the gp120-gp41 heterodimer allows rapid transcytosis of the virus through CD4 negative cells such as simple epithelial monolayers of the intestinal, rectal and endocervical epithelial barriers. Both gp120 and gp41 specifically recognize glycosphingolipids galactosyl-ceramide (GalCer) or 3' sulfo-galactosyl-ceramide (GalS) present in the lipid rafts structures of epithelial cells. Binding to these alternative receptors allows the rapid transcytosis of the virus through the epithelial cells. This transcytotic vesicle-mediated transport of virions from the apical side to the basolateral side of the epithelial cells does not involve infection of the cells themselves. The sequence is that of Envelope glycoprotein gp160 (env) from Cercopithecidae (Old World monkeys).